A 794-amino-acid polypeptide reads, in one-letter code: Protein SEY1 (794 aa).

Over methionine 1–alanine 687 the chain is Cytoplasmic. The region spanning glycine 43 to tyrosine 272 is the GB1/RHD3-type G domain. Glycine 53–serine 60 contributes to the GTP binding site. Residues valine 331–cysteine 352 adopt a coiled-coil conformation. Residues isoleucine 688 to leucine 708 traverse the membrane as a helical segment. The Lumenal portion of the chain corresponds to arginine 709–proline 711. A helical membrane pass occupies residues leucine 712–leucine 732. The Cytoplasmic segment spans residues tryptophan 733–glutamate 794. Residues asparagine 770–glutamate 794 are disordered. A compositionally biased stretch (basic and acidic residues) spans glutamate 775 to glutamate 794.

It belongs to the TRAFAC class dynamin-like GTPase superfamily. GB1/RHD3 GTPase family. RHD3 subfamily.

The protein resides in the endoplasmic reticulum membrane. In terms of biological role, cooperates with the reticulon proteins and tubule-shaping DP1 family proteins to generate and maintain the structure of the tubular endoplasmic reticulum network. Has GTPase activity, which is required for its function in ER organization. The protein is Protein SEY1 of Zygosaccharomyces rouxii (strain ATCC 2623 / CBS 732 / NBRC 1130 / NCYC 568 / NRRL Y-229).